The chain runs to 471 residues: Cysteine--tRNA ligase (471 aa).

Residue C29 participates in Zn(2+) binding. Positions 31–41 (PTVYNYIHIGN) match the 'HIGH' region motif. Positions 209, 234, and 238 each coordinate Zn(2+). A 'KMSKS' region motif is present at residues 266–270 (KMSKS). K269 is a binding site for ATP.

The protein belongs to the class-I aminoacyl-tRNA synthetase family. Monomer. It depends on Zn(2+) as a cofactor.

The protein resides in the cytoplasm. The catalysed reaction is tRNA(Cys) + L-cysteine + ATP = L-cysteinyl-tRNA(Cys) + AMP + diphosphate. The protein is Cysteine--tRNA ligase of Listeria welshimeri serovar 6b (strain ATCC 35897 / DSM 20650 / CCUG 15529 / CIP 8149 / NCTC 11857 / SLCC 5334 / V8).